The sequence spans 407 residues: Putative glucose/galactose transporter (407 aa).

A run of 12 helical transmembrane segments spans residues 11–31 (GSLTALFFLMGFITVLNDILI), 47–67 (LIQFCFFGAYFIMGGVFGNVI), 70–90 (IGYPFGVVLGFVITASGCALF), 96–116 (FGSYGFFLGALFILASGIVCL), 139–159 (VQAFNSLGTTLGPIFGSLLIF), 180–200 (VQMPYLGLAVFSLLLALVMYL), 225–245 (FVFGALGIFFYVGGEVAIGSF), 263–283 (HYLVYYWGGAMVGRFLGSALM), 300–320 (IILIALAILIGGKIALFALTF), 321–341 (VGFFNSIMFPTIFSLATLNLG), 349–369 (GVISMAIVGGALIPPIQGVVT), and 378–398 (NLLYAYSVPLLCYFYILFFAL).

This sequence belongs to the major facilitator superfamily. FHS transporter (TC 2.A.1.7) family.

The protein resides in the cell inner membrane. Functionally, intake of glucose and galactose. The sequence is that of Putative glucose/galactose transporter (gluP) from Helicobacter pylori (strain J99 / ATCC 700824) (Campylobacter pylori J99).